Reading from the N-terminus, the 578-residue chain is ATP-dependent RNA helicase dbp3 (578 aa).

Positions 59 to 69 (KRSADEEASVK) are enriched in basic and acidic residues. The tract at residues 59-117 (KRSADEEASVKRKEKKSKHEHKKHKKDKPSADKDRISKKDKKKSKKGKSKTKEESIEIN) is disordered. Positions 70–85 (RKEKKSKHEHKKHKKD) are enriched in basic residues. The segment covering 86–95 (KPSADKDRIS) has biased composition (basic and acidic residues). A compositionally biased stretch (basic residues) spans 96-107 (KKDKKKSKKGKS). The short motif at 167–193 (LQFDELDVSAKLREGLKNYKEPTPIQA) is the Q motif element. A Helicase ATP-binding domain is found at 196-373 (WPYLLAGRDV…ATFLKDPVKI (178 aa)). An ATP-binding site is contributed by 209 to 216 (AETGSGKT). Positions 316–319 (DEAD) match the DEAD box motif. A Helicase C-terminal domain is found at 402–550 (MLDNLLRKHL…DIPEGLFKFG (149 aa)).

This sequence belongs to the DEAD box helicase family. DDX5/DBP2 subfamily.

It localises to the nucleus. Its subcellular location is the nucleolus. The catalysed reaction is ATP + H2O = ADP + phosphate + H(+). ATP-dependent RNA helicase required for 60S ribosomal subunit synthesis. Involved in efficient pre-rRNA processing, predominantly at site A3, which is necessary for the normal formation of 25S and 5.8S rRNAs. This Schizosaccharomyces pombe (strain 972 / ATCC 24843) (Fission yeast) protein is ATP-dependent RNA helicase dbp3 (dbp3).